The following is a 66-amino-acid chain: COP-associated protein (66 aa).

Positions 1–66 (MKATFQVPSI…ALLDAGQEVV (66 aa)) constitute an HMA domain. Positions 12 and 15 each coordinate Cu cation. A disulfide bridge connects residues C12 and C15.

Functionally, part of a cation-transporting system which is associated with copper export out of the H.pylori cells. The protein is COP-associated protein (copP) of Helicobacter pylori (strain ATCC 700392 / 26695) (Campylobacter pylori).